The chain runs to 485 residues: Glutamyl-tRNA(Gln) amidotransferase subunit A (485 aa).

Active-site charge relay system residues include Lys-74 and Ser-149. The active-site Acyl-ester intermediate is the Ser-173.

The protein belongs to the amidase family. GatA subfamily. Heterotrimer of A, B and C subunits.

The catalysed reaction is L-glutamyl-tRNA(Gln) + L-glutamine + ATP + H2O = L-glutaminyl-tRNA(Gln) + L-glutamate + ADP + phosphate + H(+). In terms of biological role, allows the formation of correctly charged Gln-tRNA(Gln) through the transamidation of misacylated Glu-tRNA(Gln) in organisms which lack glutaminyl-tRNA synthetase. The reaction takes place in the presence of glutamine and ATP through an activated gamma-phospho-Glu-tRNA(Gln). The polypeptide is Glutamyl-tRNA(Gln) amidotransferase subunit A (Herminiimonas arsenicoxydans).